A 1096-amino-acid polypeptide reads, in one-letter code: Phospholipase D zeta 1 (1096 aa).

Ala-2 is subject to N-acetylalanine. The 155-residue stretch at 50 to 204 (PKAVIVSVSR…REVCRFLEVS (155 aa)) folds into the PX domain. Residues 131–152 (VQDEDADEVPLHQDESAKNRDV) are disordered. Basic and acidic residues predominate over residues 139–151 (VPLHQDESAKNRD). Residues 234–342 (DDSNRCCGCC…WVASINDAAL (109 aa)) form the PH domain. Residues 477–504 (YLWSHHEKLVIVDNQVCFIGGLDLCFGR) form the PLD phosphodiesterase 1 domain. Active-site residues include His-482, Lys-484, and Asp-489. Basic and acidic residues predominate over residues 607–632 (GRQEESDIESKKEEDSIRGIRRDDSF). The interval 607-691 (GRQEESDIES…DGDTPMRGFV (85 aa)) is disordered. The PLD phosphodiesterase 2 domain maps to 892 to 919 (SQVYVHSKIMIVDDRAALIGSANINDRS). Catalysis depends on residues His-897, Lys-899, and Asp-904.

Belongs to the phospholipase D family. PXPH-PLD subfamily. Does not require Ca(2+) or any other cation for activity. serves as cofactor. In terms of tissue distribution, expressed in inflorescences, flowers, siliques, stems, leaves, and roots. Highest expression in roots.

The protein resides in the cytoplasmic vesicle. It catalyses the reaction a 1,2-diacyl-sn-glycero-3-phosphocholine + H2O = a 1,2-diacyl-sn-glycero-3-phosphate + choline + H(+). With respect to regulation, calcium-independent and PIP2-dependent. In terms of biological role, hydrolyzes glycerol-phospholipids at the terminal phosphodiesteric bond to generate phosphatidic acids (PA). Phosphatidylcholine-selective. Regulates root-hair morphogenesis. Contributes to the supply of inorganic phosphorus for cell metabolism and diacylglycerol moieties for galactolipid synthesis in phosphorus-starved roots. Involved in root elongation during phosphate limitation. The protein is Phospholipase D zeta 1 of Arabidopsis thaliana (Mouse-ear cress).